A 385-amino-acid polypeptide reads, in one-letter code: ELAV-like protein 4 (385 aa).

Residues 12-48 (TMEPQVSNGPTSNTSNGPSSNNRNCPSPMQTGAATDD) form a disordered region. Over residues 18–33 (SNGPTSNTSNGPSSNN) the composition is skewed to low complexity. A compositionally biased stretch (polar residues) spans 34–44 (RNCPSPMQTGA). Ser-38 carries the phosphoserine modification. RRM domains follow at residues 51 to 129 (TNLI…YARP) and 137 to 217 (ANLY…FANN). Residue Ser-233 is modified to Phosphoserine. Arg-248 carries the asymmetric dimethylarginine; by CARM1; alternate modification. Arg-248 is subject to Omega-N-methylarginine; by CARM1; alternate. Residues 302-380 (WCIFVYNLSP…RVLQVSFKTN (79 aa)) enclose the RRM 3 domain.

Belongs to the RRM elav family. In terms of assembly, component of a TAU mRNP complex, at least composed of IGF2BP1, ELAVL4 and G3BP. Associates with the EIF4F cap-binding complex, composed of EIF4G, EIF4A, EIF4E and PABP. Within the EIF4F cap-binding complex, interacts with EIF4A. Interacts with SMN (via Tudor domain) in an RNA-independent manner; the interaction is required for localization of ELAVL4 to RNA granules. Interacts with MAP1 light chain LC1 (via C-terminus); the interaction contributes to the association of ELAVL4 with microtubules. Interacts with MAP1 light chain LC2. In terms of processing, methylated by CARM1, which leads to reduced RNA-binding activity and enhanced interaction with SMN. Methylation at Arg-248 by CARM1 weakens protective binding to the 3'UTR of CDKN1A mRNA and down-regulates CDKN1A protein expression, thereby maintaining cells in a proliferative state. Methylation is inhibited by NGF, which facilitates neurite outgrowth. In terms of tissue distribution, expressed in the brain, including the hippocampus, and in pancreatic beta cells (at protein level). Expressed in pyramidal neurons of the hippocampal CA3 and CA1 region and in the hilus but not in dentate granule cells (at protein level). Expressed in the dorsal root ganglion and the spinal cord (at protein level). Expressed in neural stem and progenitor cells (at protein level). Expressed in radial glia-like cells and in transient amplifying cells in the subventricular zone (SVZ), and in immature neurons both in the SVZ and the rostral migratory stream as well as in mature neurons in the olfactory bulb (at protein level). Expressed in testis and in the brain, including the hippocampus, the neocortex and the cerebellum. Expressed in lower- but not upper-layer primary neurons of the mature neocortex, in the hippocampal regions CA1-3 and the dentate gyrus. Expressed in the mitral and granule cells of the olfactory bulb, cerebral cortex, entorhinal cortex, thalamus, medial habenula, amygdala, granule cells of the cerebellum, pons, olivary nucleus, dorsal and ventral spinal cord and in dorsal root ganglia. Expressed in motor neurons. Isoform 4: Expressed in the brain. Isoform 5: Expressed in the brain. Isoform 6: Expressed in the brain. Isoform 7: Expressed in the brain. Isoform 8: Expressed in the brain. Isoform 9: Expressed in the brain. Isoform 10: Expressed in the brain. Isoform 11: Expressed in the brain.

It is found in the cytoplasm. The protein localises to the perikaryon. It localises to the cell projection. The protein resides in the dendrite. Its subcellular location is the axon. It is found in the growth cone. In terms of biological role, RNA-binding protein that is involved in the post-transcriptional regulation of mRNAs. Plays a role in the regulation of mRNA stability, alternative splicing and translation. Binds to AU-rich element (ARE) sequences in the 3' untranslated region (3'UTR) of target mRNAs, including GAP43, VEGF, FOS, CDKN1A and ACHE mRNA. Many of the target mRNAs are coding for RNA-binding proteins, transcription factors and proteins involved in RNA processing and/or neuronal development and function. By binding to the mRNA 3'UTR, decreases mRNA deadenylation and thereby contributes to the stabilization of mRNA molecules and their protection from decay. Also binds to the polyadenylated (poly(A)) tail in the 3'UTR of mRNA, thereby increasing its affinity for mRNA binding. Mainly plays a role in neuron-specific RNA processing by stabilization of mRNAs such as GAP43, ACHE and mRNAs of other neuronal proteins, thereby contributing to the differentiation of neural progenitor cells, nervous system development, learning and memory mechanisms. Involved in the negative regulation of the proliferative activity of neuronal stem cells and in the positive regulation of neuronal differentiation of neural progenitor cells. Promotes neuronal differentiation of neural stem/progenitor cells in the adult subventricular zone of the hippocampus by binding to and stabilizing SATB1 mRNA. Binds and stabilizes MSI1 mRNA in neural stem cells. Exhibits increased binding to ACHE mRNA during neuronal differentiation, thereby stabilizing ACHE mRNA and enhancing its expression. Protects CDKN1A mRNA from decay by binding to its 3'-UTR. May bind to APP and BACE1 mRNAS and the BACE1AS lncRNA and enhance their stabilization. Plays a role in neurite outgrowth and in the establishment and maturation of dendritic arbors, thereby contributing to neocortical and hippocampal circuitry function. Stabilizes GAP43 mRNA and protects it from decay during postembryonic development in the brain. By promoting the stabilization of GAP43 mRNA, plays a role in NGF-mediated neurite outgrowth. Binds to BDNF long 3'UTR mRNA, thereby leading to its stabilization and increased dendritic translation after activation of PKC. By increasing translation of BDNF after nerve injury, may contribute to nerve regeneration. Acts as a stabilizing factor by binding to the 3'UTR of NOVA1 mRNA, thereby increasing its translation and enhancing its functional activity in neuron-specific splicing. Stimulates translation of mRNA in a poly(A)- and cap-dependent manner, possibly by associating with the EIF4F cap-binding complex. May also negatively regulate translation by binding to the 5'UTR of Ins2 mRNA, thereby repressing its translation. Upon glucose stimulation, Ins2 mRNA is released from ELAVL4 and translational inhibition is abolished. Also plays a role in the regulation of alternative splicing. May regulate alternative splicing of CALCA pre-mRNA into Calcitonin and Calcitonin gene-related peptide 1 (CGRP) by competing with splicing regulator TIAR for binding to U-rich sequences of CALCA pre-mRNA. This Mus musculus (Mouse) protein is ELAV-like protein 4 (Elavl4).